A 211-amino-acid chain; its full sequence is Large ribosomal subunit protein bL25 (211 aa).

This sequence belongs to the bacterial ribosomal protein bL25 family. CTC subfamily. Part of the 50S ribosomal subunit; part of the 5S rRNA/L5/L18/L25 subcomplex. Contacts the 5S rRNA. Binds to the 5S rRNA independently of L5 and L18.

Functionally, this is one of the proteins that binds to the 5S RNA in the ribosome where it forms part of the central protuberance. This is Large ribosomal subunit protein bL25 from Methylobacterium nodulans (strain LMG 21967 / CNCM I-2342 / ORS 2060).